The following is a 240-amino-acid chain: Prolactin-8A6 (240 aa).

The first 30 residues, 1–30, serve as a signal peptide directing secretion; the sequence is MALLLSQPHFSGPLLLLVVSNLLLWEKAAS. 3 cysteine pairs are disulfide-bonded: Cys34–Cys41, Cys101–Cys216, and Cys233–Cys240. Asn212 is a glycosylation site (N-linked (GlcNAc...) asparagine).

The protein belongs to the somatotropin/prolactin family. As to expression, expressed specifically in the spongiotrophoblast and trophoblast giant cells from the junctional zone of the chorioallantoic placenta.

The protein localises to the secreted. In Mus musculus (Mouse), this protein is Prolactin-8A6 (Prl8a6).